Reading from the N-terminus, the 597-residue chain is Elongation factor 4 (597 aa).

The tr-type G domain maps to 2–184 (KHIRNFSIIA…TIVKCIPAPE (183 aa)). Residues 14–19 (DHGKST) and 131–134 (NKID) contribute to the GTP site.

This sequence belongs to the TRAFAC class translation factor GTPase superfamily. Classic translation factor GTPase family. LepA subfamily.

It localises to the cell inner membrane. The catalysed reaction is GTP + H2O = GDP + phosphate + H(+). Its function is as follows. Required for accurate and efficient protein synthesis under certain stress conditions. May act as a fidelity factor of the translation reaction, by catalyzing a one-codon backward translocation of tRNAs on improperly translocated ribosomes. Back-translocation proceeds from a post-translocation (POST) complex to a pre-translocation (PRE) complex, thus giving elongation factor G a second chance to translocate the tRNAs correctly. Binds to ribosomes in a GTP-dependent manner. The protein is Elongation factor 4 of Aliivibrio salmonicida (strain LFI1238) (Vibrio salmonicida (strain LFI1238)).